The primary structure comprises 291 residues: Methylsterol monooxygenase 1-3 (291 aa).

3 helical membrane-spanning segments follow: residues 41–61 (TILV…IVEW), 92–112 (FLLV…MVGI), and 114–134 (SGLP…YFLI). Residues 128–263 (LVVYFLIEDY…FTYCDYIYGT (136 aa)) enclose the Fatty acid hydroxylase domain. The short motif at 143-147 (HRWMH) is the Histidine box-1 element. Residues 156–160 (HRIHH) carry the Histidine box-2 motif. Residues 178–198 (ILILGIPTFLGPAIAPGHIMT) traverse the membrane as a helical segment. The Histidine box-3 motif lies at 235 to 241 (YHDYHHY).

The protein belongs to the sterol desaturase family. In terms of assembly, interacts with ACBP1. Fe cation is required as a cofactor. In terms of tissue distribution, expressed at low levels in leaves, roots, siliques and flowers.

It localises to the endoplasmic reticulum membrane. It catalyses the reaction 4,4-dimethyl-5alpha-cholest-7-en-3beta-ol + 6 Fe(II)-[cytochrome b5] + 3 O2 + 5 H(+) = 4alpha-carboxy-4beta-methyl-5alpha-cholest-7-ene-3beta-ol + 6 Fe(III)-[cytochrome b5] + 4 H2O. It carries out the reaction 24-methylidenelophenol + 6 Fe(II)-[cytochrome b5] + 3 O2 + 5 H(+) = 4alpha-carboxy-ergosta-7,24(24(1))-dien-3beta-ol + 6 Fe(III)-[cytochrome b5] + 4 H2O. Non-heme iron oxygenase involved in sterols biosynthesis by catalyzing the removal of the first methyl group at the C-4 position. 4,4-dimethyl-9-beta,19-cyclopropylsterols such as 24-methylenecycloartanol are the preferred substrates. This chain is Methylsterol monooxygenase 1-3, found in Arabidopsis thaliana (Mouse-ear cress).